The chain runs to 904 residues: HTH-type transcriptional regulator MalT (904 aa).

ATP is bound at residue Cys-39 to Thr-46. In terms of domain architecture, HTH luxR-type spans Glu-832–Leu-897. The segment at residues Asn-856–Arg-875 is a DNA-binding region (H-T-H motif).

The protein belongs to the MalT family. In terms of assembly, monomer in solution. Oligomerizes to an active state in the presence of the positive effectors ATP and maltotriose.

With respect to regulation, activated by ATP and maltotriose, which are both required for DNA binding. Its function is as follows. Positively regulates the transcription of the maltose regulon whose gene products are responsible for uptake and catabolism of malto-oligosaccharides. Specifically binds to the promoter region of its target genes, recognizing a short DNA motif called the MalT box. This Serratia proteamaculans (strain 568) protein is HTH-type transcriptional regulator MalT.